The chain runs to 119 residues: Small ribosomal subunit protein uS13 (119 aa).

The tract at residues 93–119 (RRGLPLRGQRTRSNARTRKGKRKPIRS) is disordered.

The protein belongs to the universal ribosomal protein uS13 family. As to quaternary structure, part of the 30S ribosomal subunit. Forms a loose heterodimer with protein S19. Forms two bridges to the 50S subunit in the 70S ribosome.

In terms of biological role, located at the top of the head of the 30S subunit, it contacts several helices of the 16S rRNA. In the 70S ribosome it contacts the 23S rRNA (bridge B1a) and protein L5 of the 50S subunit (bridge B1b), connecting the 2 subunits; these bridges are implicated in subunit movement. Contacts the tRNAs in the A and P-sites. The protein is Small ribosomal subunit protein uS13 of Coxiella burnetii (strain RSA 493 / Nine Mile phase I).